Consider the following 204-residue polypeptide: WW domain-containing protein C11B10.08 (204 aa).

One can recognise a WW domain in the interval 7–43 (EGLPNGWVAQWDERYKCYFYVNESDPKAKPQWECPVR). A disordered region spans residues 32 to 117 (PKAKPQWECP…GYPQQPYYYP (86 aa)). Low complexity-rich tracts occupy residues 66-100 (YSNS…GAAP) and 108-117 (GYPQQPYYYP).

The protein localises to the cytoplasm. Its subcellular location is the nucleus. The chain is WW domain-containing protein C11B10.08 from Schizosaccharomyces pombe (strain 972 / ATCC 24843) (Fission yeast).